A 564-amino-acid polypeptide reads, in one-letter code: Proline--tRNA ligase (564 aa).

The protein belongs to the class-II aminoacyl-tRNA synthetase family. ProS type 1 subfamily. In terms of assembly, homodimer.

The protein resides in the cytoplasm. It carries out the reaction tRNA(Pro) + L-proline + ATP = L-prolyl-tRNA(Pro) + AMP + diphosphate. In terms of biological role, catalyzes the attachment of proline to tRNA(Pro) in a two-step reaction: proline is first activated by ATP to form Pro-AMP and then transferred to the acceptor end of tRNA(Pro). As ProRS can inadvertently accommodate and process non-cognate amino acids such as alanine and cysteine, to avoid such errors it has two additional distinct editing activities against alanine. One activity is designated as 'pretransfer' editing and involves the tRNA(Pro)-independent hydrolysis of activated Ala-AMP. The other activity is designated 'posttransfer' editing and involves deacylation of mischarged Ala-tRNA(Pro). The misacylated Cys-tRNA(Pro) is not edited by ProRS. In Xanthomonas campestris pv. campestris (strain 8004), this protein is Proline--tRNA ligase.